The following is a 913-amino-acid chain: Eukaryotic translation initiation factor 3 subunit C (913 aa).

A disordered region spans residues 1-31 (MSRFFANGSDSESESSEEEVQASNFNKANNF). Acidic residues predominate over residues 11–20 (SESESSEEEV). Residues 21-31 (QASNFNKANNF) are compositionally biased toward polar residues. Phosphoserine occurs at positions 34, 165, 177, and 186. 2 disordered regions span residues 157 to 195 (FREA…AGTG) and 208 to 285 (PTKV…EDGE). Over residues 162–171 (DQESDVDEGE) the composition is skewed to acidic residues. Basic and acidic residues predominate over residues 172 to 184 (GEAHDSDAERAGA). The segment covering 214–239 (DEDDSDDSIDWDSDTESETESSEDEN) has biased composition (acidic residues). The span at 244 to 263 (MRERFLKRTTEKEDKDDDKR) shows a compositional bias: basic and acidic residues. Basic residues predominate over residues 264–276 (KDKRKEQKHKVRK). The region spanning 645 to 821 (FHMHINLELL…ETVVMHRSEP (177 aa)) is the PCI domain. Positions 856–913 (RGNMGNRDRGYNRNQNNQGGNWGGQRRDNRNQRNRNQRGHHKQQQQQQQQQVQTIEEE) are disordered. Positions 887–898 (QRNRNQRGHHKQ) are enriched in basic residues.

The protein belongs to the eIF-3 subunit C family. As to quaternary structure, component of the eukaryotic translation initiation factor 3 (eIF-3) complex. The eIF-3 complex interacts with pix.

The protein resides in the cytoplasm. In terms of biological role, component of the eukaryotic translation initiation factor 3 (eIF-3) complex, which is involved in protein synthesis of a specialized repertoire of mRNAs and, together with other initiation factors, stimulates binding of mRNA and methionyl-tRNAi to the 40S ribosome. The eIF-3 complex specifically targets and initiates translation of a subset of mRNAs involved in cell proliferation. This Drosophila virilis (Fruit fly) protein is Eukaryotic translation initiation factor 3 subunit C.